The sequence spans 149 residues: Glucosamine 6-phosphate N-acetyltransferase (149 aa).

The N-acetyltransferase domain maps to 7–149 (YTFRKLKLTD…DGGVEMVCRF (143 aa)). Substrate contacts are provided by residues T29, 76-79 (KLIH), and 88-90 (EDI). Acetyl-CoA contacts are provided by residues 90–92 (ISV) and 98–103 (GKKLGY). Residues 119-120 (YK) and D124 each bind substrate. 133-135 (YEK) provides a ligand contact to acetyl-CoA. Substrate is bound at residue R148.

This sequence belongs to the acetyltransferase family. GNA1 subfamily.

The enzyme catalyses D-glucosamine 6-phosphate + acetyl-CoA = N-acetyl-D-glucosamine 6-phosphate + CoA + H(+). It functions in the pathway nucleotide-sugar biosynthesis; UDP-N-acetyl-alpha-D-glucosamine biosynthesis; N-acetyl-alpha-D-glucosamine 1-phosphate from alpha-D-glucosamine 6-phosphate (route I): step 1/2. In Candida albicans (Yeast), this protein is Glucosamine 6-phosphate N-acetyltransferase (GNA1).